Here is a 79-residue protein sequence, read N- to C-terminus: Small ribosomal subunit protein uS17 (79 aa).

The protein belongs to the universal ribosomal protein uS17 family. Part of the 30S ribosomal subunit.

Functionally, one of the primary rRNA binding proteins, it binds specifically to the 5'-end of 16S ribosomal RNA. The protein is Small ribosomal subunit protein uS17 of Rhizobium johnstonii (strain DSM 114642 / LMG 32736 / 3841) (Rhizobium leguminosarum bv. viciae).